The chain runs to 1482 residues: Calcium-dependent protein kinase 6 (1482 aa).

2 disordered regions span residues 250 to 320 and 739 to 760; these read TNNY…IRPN and SENF…DDSN. Polar residues predominate over residues 254 to 264; that stretch reads AHDNNQDSNSY. Over residues 277–301 the composition is skewed to acidic residues; it reads EEDNDTGDTYADNEEDEDNRDDNDD. Positions 302–318 are enriched in polar residues; the sequence is YSQYNQCEVESDTNQIR. Residues 739–748 are compositionally biased toward low complexity; sequence SENFSNNFND. Positions 749–760 are enriched in basic and acidic residues; the sequence is NKQKSLKNDDSN. 2 EF-hand domains span residues 931-966 and 972-1007; these read IFER…LCYN and VDKK…LLKQ. Asp985, Ser987, Asn989, Cys991, and Asp996 together coordinate Ca(2+). One can recognise a Protein kinase domain in the interval 1043-1295; the sequence is LSFKKILGCG…AAVLLHHPWF (253 aa). ATP contacts are provided by residues 1049–1057 and Lys1072; that span reads LGCGAFGEV. Asp1162 (proton acceptor) is an active-site residue. EF-hand domains are found at residues 1338–1373, 1376–1406, 1407–1442, and 1468–1482; these read NHVK…AGVK, DINR…RWKN, IDST…NGVN, and KISF…LSTF. Asp1351, Asn1353, Asn1355, Ser1357, and Glu1362 together coordinate Ca(2+). Residues Asp1420, Asp1422, Asp1424, Tyr1426, and Asp1431 each contribute to the Ca(2+) site.

This sequence belongs to the protein kinase superfamily. Ser/Thr protein kinase family. CDPK subfamily. It depends on Mg(2+) as a cofactor.

The enzyme catalyses L-seryl-[protein] + ATP = O-phospho-L-seryl-[protein] + ADP + H(+). The catalysed reaction is L-threonyl-[protein] + ATP = O-phospho-L-threonyl-[protein] + ADP + H(+). With respect to regulation, activated by calcium. Calcium-dependent protein kinase which acts as a sensor and effector of intracellular Ca(2+) levels. In sporozoites, probably involved in the secretion of the cysteine protease that cleaves circumsporozoite protein CSP, thereby exposing CSP TSR domain, which binds with high affinity to highly sulfated heparan sulfate proteoglycans (HSPGs), resulting in productive invasion of the host hepatocytes. This is Calcium-dependent protein kinase 6 from Plasmodium berghei (strain Anka).